A 226-amino-acid polypeptide reads, in one-letter code: Cytidylate kinase (226 aa).

ATP is bound at residue 12–20; it reads GPSGAGKGT.

Belongs to the cytidylate kinase family. Type 1 subfamily.

The protein resides in the cytoplasm. It carries out the reaction CMP + ATP = CDP + ADP. It catalyses the reaction dCMP + ATP = dCDP + ADP. The chain is Cytidylate kinase from Vibrio vulnificus (strain YJ016).